We begin with the raw amino-acid sequence, 473 residues long: Probable lipid II flippase MurJ (473 aa).

13 consecutive transmembrane segments (helical) span residues 31 to 51 (TFGA…PFFL), 90 to 110 (LVTL…ASIF), 125 to 145 (LIRL…FYSV), 153 to 173 (FLPA…CLFG), 177 to 197 (WAAA…LPFG), 215 to 235 (FFGT…DVNV), 253 to 273 (LYQL…LSTL), 300 to 320 (IGLM…GAFT), 327 to 347 (SAQI…FNLL), 360 to 380 (PFFA…ILGF), 382 to 402 (MGAS…FVFL), 414 to 434 (IFKI…LRGS), and 439 to 459 (LGTI…SKLL).

Belongs to the MurJ/MviN family.

Its subcellular location is the cell inner membrane. The protein operates within cell wall biogenesis; peptidoglycan biosynthesis. Its function is as follows. Involved in peptidoglycan biosynthesis. Transports lipid-linked peptidoglycan precursors from the inner to the outer leaflet of the cytoplasmic membrane. This chain is Probable lipid II flippase MurJ, found in Thermotoga maritima (strain ATCC 43589 / DSM 3109 / JCM 10099 / NBRC 100826 / MSB8).